Here is a 334-residue protein sequence, read N- to C-terminus: Holliday junction branch migration complex subunit RuvB (334 aa).

The segment at 4–184 (ADRLIQPQLQ…FGIPLRLEFY (181 aa)) is large ATPase domain (RuvB-L). ATP-binding positions include R24, G65, K68, T69, T70, 131–133 (EDY), R174, Y184, and R221. Residue T69 coordinates Mg(2+). A small ATPAse domain (RuvB-S) region spans residues 185–255 (NIKDLSTIVT…VADHALDLLD (71 aa)). Residues 258-334 (NEGFDYMDRK…YQHFQLIKPE (77 aa)) form a head domain (RuvB-H) region. DNA-binding residues include R294, R313, and R318.

Belongs to the RuvB family. Homohexamer. Forms an RuvA(8)-RuvB(12)-Holliday junction (HJ) complex. HJ DNA is sandwiched between 2 RuvA tetramers; dsDNA enters through RuvA and exits via RuvB. An RuvB hexamer assembles on each DNA strand where it exits the tetramer. Each RuvB hexamer is contacted by two RuvA subunits (via domain III) on 2 adjacent RuvB subunits; this complex drives branch migration. In the full resolvosome a probable DNA-RuvA(4)-RuvB(12)-RuvC(2) complex forms which resolves the HJ.

The protein localises to the cytoplasm. The catalysed reaction is ATP + H2O = ADP + phosphate + H(+). The RuvA-RuvB-RuvC complex processes Holliday junction (HJ) DNA during genetic recombination and DNA repair, while the RuvA-RuvB complex plays an important role in the rescue of blocked DNA replication forks via replication fork reversal (RFR). RuvA specifically binds to HJ cruciform DNA, conferring on it an open structure. The RuvB hexamer acts as an ATP-dependent pump, pulling dsDNA into and through the RuvAB complex. RuvB forms 2 homohexamers on either side of HJ DNA bound by 1 or 2 RuvA tetramers; 4 subunits per hexamer contact DNA at a time. Coordinated motions by a converter formed by DNA-disengaged RuvB subunits stimulates ATP hydrolysis and nucleotide exchange. Immobilization of the converter enables RuvB to convert the ATP-contained energy into a lever motion, pulling 2 nucleotides of DNA out of the RuvA tetramer per ATP hydrolyzed, thus driving DNA branch migration. The RuvB motors rotate together with the DNA substrate, which together with the progressing nucleotide cycle form the mechanistic basis for DNA recombination by continuous HJ branch migration. Branch migration allows RuvC to scan DNA until it finds its consensus sequence, where it cleaves and resolves cruciform DNA. In Shewanella putrefaciens (strain CN-32 / ATCC BAA-453), this protein is Holliday junction branch migration complex subunit RuvB.